The following is a 472-amino-acid chain: UDP-glucosyltransferase 103 (472 aa).

The active-site Proton acceptor is histidine 15. Residue histidine 15 coordinates an anthocyanidin. Aspartate 117 acts as the Charge relay in catalysis. UDP-alpha-D-glucose-binding residues include alanine 344, glutamine 346, histidine 361, tryptophan 364, asparagine 365, serine 366, and glutamate 369. An an anthocyanidin-binding site is contributed by glycine 384. 2 residues coordinate UDP-alpha-D-glucose: glutamate 385 and glutamine 386.

Belongs to the UDP-glycosyltransferase family.

The catalysed reaction is (20S)-ginsenoside F1 + UDP-alpha-D-glucose = (20S)-ginsenoside Rg1 + UDP + H(+). It participates in secondary metabolite biosynthesis; terpenoid biosynthesis. In terms of biological role, probable component of the triterpene saponins (e.g. ginsenosides) biosynthetic pathway. No detectable activity toward protopanaxatriol (PPT). In Panax ginseng (Korean ginseng), this protein is UDP-glucosyltransferase 103.